Here is a 198-residue protein sequence, read N- to C-terminus: RNA 2',3'-cyclic phosphodiesterase (198 aa).

His-39 serves as the catalytic Proton donor. 2 consecutive short sequence motifs (HXTX) follow at residues 39 to 42 (HLTL) and 130 to 133 (HITL). His-130 functions as the Proton acceptor in the catalytic mechanism.

This sequence belongs to the 2H phosphoesterase superfamily. ThpR family.

It catalyses the reaction a 3'-end 2',3'-cyclophospho-ribonucleotide-RNA + H2O = a 3'-end 2'-phospho-ribonucleotide-RNA + H(+). Hydrolyzes RNA 2',3'-cyclic phosphodiester to an RNA 2'-phosphomonoester. In Thermus thermophilus (strain ATCC 27634 / DSM 579 / HB8), this protein is RNA 2',3'-cyclic phosphodiesterase.